A 195-amino-acid chain; its full sequence is Large ribosomal subunit protein bL25 (195 aa).

It belongs to the bacterial ribosomal protein bL25 family. CTC subfamily. In terms of assembly, part of the 50S ribosomal subunit; part of the 5S rRNA/L5/L18/L25 subcomplex. Contacts the 5S rRNA. Binds to the 5S rRNA independently of L5 and L18.

Functionally, this is one of the proteins that binds to the 5S RNA in the ribosome where it forms part of the central protuberance. The polypeptide is Large ribosomal subunit protein bL25 (Chlorobium chlorochromatii (strain CaD3)).